We begin with the raw amino-acid sequence, 177 residues long: MSRVAKMPVAIPEGVEIAIKDTQINVKGALGALALAQNAHVVIASNDGKLTFVPANDSRQANAMSGTMRQLVNNMVVGVTKGFQKKLNLVGVGFKAQAQGDKLNLTVGYSHPVVMAMPAGITVATPTPTEVVIKGSDRQRVGQIAAEVRAVRPPEPYKGKGIRYSDEKITIKETKKK.

It belongs to the universal ribosomal protein uL6 family. As to quaternary structure, part of the 50S ribosomal subunit.

Its function is as follows. This protein binds to the 23S rRNA, and is important in its secondary structure. It is located near the subunit interface in the base of the L7/L12 stalk, and near the tRNA binding site of the peptidyltransferase center. The polypeptide is Large ribosomal subunit protein uL6 (Polaromonas naphthalenivorans (strain CJ2)).